Reading from the N-terminus, the 3391-residue chain is Genome polyprotein (3391 aa).

The tract at residues 1–15 is interaction with host EXOC1; the sequence is MNNQRKKARSTPFNM. Topologically, residues 1–101 are cytoplasmic; sequence MNNQRKKARS…LNILNRRRRT (101 aa). Residues 37-72 are hydrophobic; homodimerization of capsid protein C; sequence MLQGRGPLKLFMALVAFLRFLTIPPTAGILKRWGTI. Residues 101–114 constitute a propeptide, ER anchor for the capsid protein C, removed in mature form by serine protease NS3; sequence TAGVIIMLIPTAMA. A helical membrane pass occupies residues 102 to 119; it reads AGVIIMLIPTAMAFHLTT. Topologically, residues 120–241 are extracellular; it reads RNGEPHMIVG…KHVQRIETWI (122 aa). An N-linked (GlcNAc...) asparagine; by host glycan is attached at N183. The chain crosses the membrane as a helical span at residues 242 to 259; that stretch reads LRHPGFTIMAAILAYTIG. Residues 260-265 lie on the Cytoplasmic side of the membrane; it reads TTHFQR. The chain crosses the membrane as a helical span at residues 266 to 280; sequence ALIFILLTAVAPSMT. Residues 281-725 are Extracellular-facing; it reads MRCIGISNRD…LHQVFGAIYG (445 aa). 4 cysteine pairs are disulfide-bonded: C283-C310, C340-C401, C354-C385, and C372-C396. An N-linked (GlcNAc...) asparagine; by host glycan is attached at N347. The interval 378 to 391 is fusion peptide; the sequence is DRGWGNGCGLFGKG. A glycan (N-linked (GlcNAc...) asparagine; by host) is linked at N433. Disulfide bonds link C465-C565 and C582-C613. The helical transmembrane segment at 726-746 threads the bilayer; that stretch reads AAFSGVSWTMKILIGVIITWI. Over 747–752 the chain is Cytoplasmic; that stretch reads GMNSRS. A helical transmembrane segment spans residues 753–773; the sequence is TSLSVSLVLVGVVTLYLGAMV. Residues 774 to 1195 are Extracellular-facing; sequence QADSGCVVSW…MVGATMTDDI (422 aa). Disulfide bonds link C779-C790, C830-C918, C954-C998, C1055-C1104, C1066-C1088, and C1087-C1091. 2 N-linked (GlcNAc...) asparagine; by host glycosylation sites follow: N905 and N982. N1134 is a glycosylation site (N-linked (GlcNAc...) asparagine; by host). Residues 1196–1220 form a helical membrane-spanning segment; it reads GMGVTYLALLAAFKVRPTFAAGLLL. At 1221–1226 the chain is on the cytoplasmic side; the sequence is RKLTSK. A helical membrane pass occupies residues 1227–1245; that stretch reads ELMMATIGIALLSQSTIPE. The Lumenal portion of the chain corresponds to 1246–1269; the sequence is TILELTDALALGMMVLKIVRNMEK. The helical transmembrane segment at 1270–1290 threads the bilayer; sequence YQLAVTIMAILCVPNAVILQN. A topological domain (cytoplasmic) is located at residue A1291. Residues 1292-1310 form a helical membrane-spanning segment; the sequence is WKVSCTILAAVSVSPLLLT. The Lumenal portion of the chain corresponds to 1311–1317; the sequence is SSQQKAD. The helical transmembrane segment at 1318–1338 threads the bilayer; sequence WIPLALTIKGLNPTAIFLTTL. The Cytoplasmic portion of the chain corresponds to 1339–1346; it reads SRTSKKRS. A helical membrane pass occupies residues 1347 to 1367; it reads WPLNEAIMAVGMVSILASSLL. Over 1368–1370 the chain is Lumenal; sequence KND. Residues 1371–1391 form a helical membrane-spanning segment; that stretch reads IPMTGPLVAGGLLTVCYVLTG. Residues 1392-1447 lie on the Cytoplasmic side of the membrane; sequence RSADLELERAADVKWEDQAEISGSSPILSITISEDGSMSIKNEEEEQTLTILIRTG. The segment at 1398–1437 is interacts with and activates NS3 protease; it reads LERAADVKWEDQAEISGSSPILSITISEDGSMSIKNEEEE. Positions 1448 to 1468 form an intramembrane region, helical; sequence LLVISGVFPVSIPITAAAWYL. The Cytoplasmic segment spans residues 1469–2147; sequence WEVKKQRAGV…LSELPETLET (679 aa). In terms of domain architecture, Peptidase S7 spans 1476-1653; that stretch reads AGVLWDVPSP…EKSIEDNPEI (178 aa). Residues H1526, D1550, and S1610 each act as charge relay system; for serine protease NS3 activity in the active site. The 157-residue stretch at 1655–1811 folds into the Helicase ATP-binding domain; sequence DDIFRKKRLT…QSNAPIMDEE (157 aa). The important for RNA-binding stretch occupies residues 1659–1662; it reads RKKR. 1668–1675 contributes to the ATP binding site; that stretch reads LHPGAGKT. The DEAH box motif lies at 1759–1762; sequence DEAH. The region spanning 1821–1988 is the Helicase C-terminal domain; the sequence is SGHEWVTDFK…IIPSMFEPER (168 aa). K1863 carries the post-translational modification N6-acetyllysine; by host. Residues 2148–2168 form a helical membrane-spanning segment; it reads LLLLTLLATVTGGIFLFLMSG. Residues 2169-2170 are Lumenal-facing; the sequence is KG. The helical intramembrane region spans 2171–2191; it reads IGKMTLGMCCIITASILLWYA. A topological domain (lumenal) is located at residue Q2192. The chain crosses the membrane as a helical span at residues 2193 to 2213; it reads IQPHWIAASIILEFFLIVLLI. Residues 2214–2228 are Cytoplasmic-facing; that stretch reads PEPEKQRTPQDNQLT. The helical transmembrane segment at 2229 to 2249 threads the bilayer; that stretch reads YVVIAILTVVAATMANEMGFL. The Lumenal portion of the chain corresponds to 2250–2274; sequence EKTKKDLGLGSITTQESESNILDID. The helical intramembrane region spans 2275 to 2295; the sequence is LRPASAWTLYAVATTFVTPML. The Lumenal segment spans residues 2296–2316; the sequence is RHSIENSSVNVSLTAIANQAT. 2 N-linked (GlcNAc...) asparagine; by host glycosylation sites follow: N2301 and N2305. An intramembrane region (helical) is located at residues 2317–2337; it reads VLMGLGKGWPLSKIHIGVPLL. Residues 2338 to 2347 lie on the Lumenal side of the membrane; it reads AIGCYSQVNP. A helical transmembrane segment spans residues 2348–2368; sequence ITLTAALLLLVAHYAIIGPGL. Residues 2369-2413 lie on the Cytoplasmic side of the membrane; sequence QAKATREAQKRAAAGIMKNPTVDGITVIDLDPIPYDPKFEKQLGQ. Residues 2414–2434 form a helical membrane-spanning segment; the sequence is VMLLILCVTQVLMMRTTWALC. Residues 2435-2459 lie on the Lumenal side of the membrane; that stretch reads EALTLATGPISTLWEGNPGRFWNTT. N-linked (GlcNAc...) asparagine; by host glycosylation is present at N2457. Residues 2460–2480 traverse the membrane as a helical segment; sequence IAVSMANIFRGSYLAGAGLLF. The Cytoplasmic portion of the chain corresponds to 2481–3391; that stretch reads SIMKNTTNTR…REEEEAGVLW (911 aa). Residues 2493-2755 enclose the mRNA cap 0-1 NS5-type MT domain; it reads TGNIGETLGE…DVDLGSGTRN (263 aa). S2547 serves as a coordination point for S-adenosyl-L-methionine. S2547 carries the post-translational modification Phosphoserine. K2552 serves as the catalytic For 2'-O-MTase activity. Positions 2568–2571 match the SUMO-interacting motif motif; sequence VVDL. Residues G2577, W2578, T2595, K2596, D2622, and V2623 each coordinate S-adenosyl-L-methionine. The active-site For 2'-O-MTase activity is D2637. I2638 provides a ligand contact to S-adenosyl-L-methionine. Active-site for 2'-O-MTase activity residues include K2672 and E2708. Y2710 serves as a coordination point for S-adenosyl-L-methionine. 4 residues coordinate Zn(2+): E2929, H2933, C2938, and C2941. Residues 3020 to 3169 enclose the RdRp catalytic domain; that stretch reads AMYADDTAGW…PLDDRFASAL (150 aa). Zn(2+)-binding residues include H3203, C3219, and C3338.

The protein in the N-terminal section; belongs to the class I-like SAM-binding methyltransferase superfamily. mRNA cap 0-1 NS5-type methyltransferase family. As to quaternary structure, homodimer. Interacts (via N-terminus) with host EXOC1 (via C-terminus); this interaction results in EXOC1 degradation through the proteasome degradation pathway. In terms of assembly, forms heterodimers with envelope protein E in the endoplasmic reticulum and Golgi. Homodimer; in the endoplasmic reticulum and Golgi. Interacts with protein prM. Interacts with non-structural protein 1. As to quaternary structure, homodimer; Homohexamer when secreted. Interacts with envelope protein E. Interacts with host PRKAA1. In terms of assembly, interacts (via N-terminus) with serine protease NS3. Forms a heterodimer with serine protease NS3. May form homooligomers. As to quaternary structure, forms a heterodimer with NS2B. Interacts with NS4B. Interacts with unphosphorylated RNA-directed RNA polymerase NS5; this interaction stimulates RNA-directed RNA polymerase NS5 guanylyltransferase activity. Interacts with host SHFL. In terms of assembly, interacts with host MAVS; this interaction inhibits the synthesis of IFN-beta. Interacts with host SHFL. Interacts with host AUP1; the interaction occurs in the presence of Dengue virus NS4B and induces lipophagy which facilitates production of virus progeny particles. May interact with host SRPRA and SEC61G. Interacts with serine protease NS3. As to quaternary structure, homodimer. Interacts with host STAT2; this interaction inhibits the phosphorylation of the latter, and, when all viral proteins are present (polyprotein), targets STAT2 for degradation. Interacts with serine protease NS3. Interacts with host PAF1 complex; the interaction may prevent the recruitment of the PAF1 complex to interferon-responsive genes, and thus reduces the immune response. In terms of processing, specific enzymatic cleavages in vivo yield mature proteins. Cleavages in the lumen of endoplasmic reticulum are performed by host signal peptidase, whereas cleavages in the cytoplasmic side are performed by serine protease NS3. Signal cleavage at the 2K-4B site requires a prior NS3 protease-mediated cleavage at the 4A-2K site. Post-translationally, cleaved in post-Golgi vesicles by a host furin, releasing the mature small envelope protein M, and peptide pr. This cleavage is incomplete as up to 30% of viral particles still carry uncleaved prM. N-glycosylated. In terms of processing, N-glycosylated. The excreted form is glycosylated and this is required for efficient secretion of the protein from infected cells. Post-translationally, acetylated by host KAT5. Acetylation modulates NS3 RNA-binding and unwinding activities and plays an important positive role for viral replication. Sumoylation of RNA-directed RNA polymerase NS5 increases NS5 protein stability allowing proper viral RNA replication. In terms of processing, phosphorylated on serines residues. This phosphorylation may trigger NS5 nuclear localization.

It localises to the virion. It is found in the host nucleus. Its subcellular location is the host cytoplasm. The protein localises to the host perinuclear region. The protein resides in the secreted. It localises to the virion membrane. It is found in the host endoplasmic reticulum membrane. Its subcellular location is the host mitochondrion. It carries out the reaction Selective hydrolysis of -Xaa-Xaa-|-Yaa- bonds in which each of the Xaa can be either Arg or Lys and Yaa can be either Ser or Ala.. The enzyme catalyses RNA(n) + a ribonucleoside 5'-triphosphate = RNA(n+1) + diphosphate. It catalyses the reaction a ribonucleoside 5'-triphosphate + H2O = a ribonucleoside 5'-diphosphate + phosphate + H(+). The catalysed reaction is ATP + H2O = ADP + phosphate + H(+). It carries out the reaction a 5'-end (5'-triphosphoguanosine)-ribonucleoside in mRNA + S-adenosyl-L-methionine = a 5'-end (N(7)-methyl 5'-triphosphoguanosine)-ribonucleoside in mRNA + S-adenosyl-L-homocysteine. The enzyme catalyses a 5'-end (N(7)-methyl 5'-triphosphoguanosine)-ribonucleoside in mRNA + S-adenosyl-L-methionine = a 5'-end (N(7)-methyl 5'-triphosphoguanosine)-(2'-O-methyl-ribonucleoside) in mRNA + S-adenosyl-L-homocysteine + H(+). In terms of biological role, plays a role in virus budding by binding to the cell membrane and gathering the viral RNA into a nucleocapsid that forms the core of a mature virus particle. During virus entry, may induce genome penetration into the host cytoplasm after hemifusion induced by the surface proteins. Can migrate to the cell nucleus where it modulates host functions. Overcomes the anti-viral effects of host EXOC1 by sequestering and degrading the latter through the proteasome degradation pathway. Functionally, inhibits RNA silencing by interfering with host Dicer. Prevents premature fusion activity of envelope proteins in trans-Golgi by binding to envelope protein E at pH6.0. After virion release in extracellular space, gets dissociated from E dimers. Its function is as follows. Acts as a chaperone for envelope protein E during intracellular virion assembly by masking and inactivating envelope protein E fusion peptide. prM is the only viral peptide matured by host furin in the trans-Golgi network probably to avoid catastrophic activation of the viral fusion activity in acidic Golgi compartment prior to virion release. prM-E cleavage is inefficient, and many virions are only partially matured. These uncleaved prM would play a role in immune evasion. In terms of biological role, may play a role in virus budding. Exerts cytotoxic effects by activating a mitochondrial apoptotic pathway through M ectodomain. May display a viroporin activity. Functionally, binds to host cell surface receptor and mediates fusion between viral and cellular membranes. Envelope protein is synthesized in the endoplasmic reticulum in the form of heterodimer with protein prM. They play a role in virion budding in the ER, and the newly formed immature particle is covered with 60 spikes composed of heterodimer between precursor prM and envelope protein E. The virion is transported to the Golgi apparatus where the low pH causes dissociation of PrM-E heterodimers and formation of E homodimers. prM-E cleavage is inefficient, and many virions are only partially matured. These uncleaved prM would play a role in immune evasion. Involved in immune evasion, pathogenesis and viral replication. Once cleaved off the polyprotein, is targeted to three destinations: the viral replication cycle, the plasma membrane and the extracellular compartment. Essential for viral replication. Required for formation of the replication complex and recruitment of other non-structural proteins to the ER-derived membrane structures. Excreted as a hexameric lipoparticle that plays a role against host immune response. Antagonizing the complement function. Binds to the host macrophages and dendritic cells. Inhibits signal transduction originating from Toll-like receptor 3 (TLR3). Its function is as follows. Involved in immune evasion, pathogenesis and viral replication. Once cleaved off the polyprotein, is targeted to three destinations: the viral replication cycle, the plasma membrane and the extracellular compartment. Essential for viral replication. Required for formation of the replication complex and recruitment of other non-structural proteins to the ER-derived membrane structures. Excreted as a hexameric lipoparticle that plays a role against host immune response. Antagonizing the complement function. Binds to the host macrophages and dendritic cells. Inhibits signal transduction originating from Toll-like receptor 3 (TLR3). Mediates complement activation, which may contribute to the pathogenesis of the vascular leakage that occurs in severe dengue disease. Activates autophagy through the AMPK/ERK/mTOR signaling pathway. Mechanistically, acts as the assembly platform for STK11-AMPK interactions and promotes STK11-AMPK interactions. In turn, promotes phosphorylation of the AMPK kinase structural domain and activates AMPK, thereby positively regulating the AMPK/ERK/mTOR signaling pathway and inducing autophagy. In terms of biological role, component of the viral RNA replication complex that functions in virion assembly and antagonizes the host immune response. Functionally, required cofactor for the serine protease function of NS3. May have membrane-destabilizing activity and form viroporins. Displays three enzymatic activities: serine protease, NTPase and RNA helicase. NS3 serine protease, in association with NS2B, performs its autocleavage and cleaves the polyprotein at dibasic sites in the cytoplasm: C-prM, NS2A-NS2B, NS2B-NS3, NS3-NS4A, NS4A-2K and NS4B-NS5. NS3 RNA helicase binds RNA and unwinds dsRNA in the 3' to 5' direction. Its function is as follows. Regulates the ATPase activity of the NS3 helicase activity. NS4A allows NS3 helicase to conserve energy during unwinding. Plays a role in the inhibition of the host innate immune response. Interacts with host MAVS and thereby prevents the interaction between RIGI and MAVS. In turn, IFN-beta production is impaired. Interacts with host AUP1 which mediates induction of lipophagy in host cells and facilitates production of virus progeny particles. In terms of biological role, functions as a signal peptide for NS4B and is required for the interferon antagonism activity of the latter. Functionally, induces the formation of ER-derived membrane vesicles where the viral replication takes place. Inhibits interferon (IFN)-induced host STAT1 phosphorylation and nuclear translocation, thereby preventing the establishment of cellular antiviral state by blocking the IFN-alpha/beta pathway. Replicates the viral (+) and (-) RNA genome, and performs the capping of genomes in the cytoplasm. NS5 methylates viral RNA cap at guanine N-7 and ribose 2'-O positions. Besides its role in RNA genome replication, also prevents the establishment of cellular antiviral state by blocking the interferon-alpha/beta (IFN-alpha/beta) signaling pathway. Inhibits host TYK2 and STAT2 phosphorylation, thereby preventing activation of JAK-STAT signaling pathway. May reduce immune responses by preventing the recruitment of the host PAF1 complex to interferon-responsive genes. This chain is Genome polyprotein, found in Dengue virus type 2 (strain Jamaica/1409/1983) (DENV-2).